The chain runs to 177 residues: Secretion monitor (177 aa).

The signal sequence occupies residues 1-30 (MIGILNRWRQFGRRYFWPHLLLGMVAASLG).

It belongs to the SecM family.

The protein localises to the cytoplasm. Its subcellular location is the cytosol. The protein resides in the periplasm. Regulates secA expression by translational coupling of the secM secA operon. Translational pausing at a specific Pro residue 5 residues before the end of the protein may allow disruption of a mRNA repressor helix that normally suppresses secA translation initiation. In Yersinia enterocolitica serotype O:8 / biotype 1B (strain NCTC 13174 / 8081), this protein is Secretion monitor.